The following is a 168-amino-acid chain: MSLNRSEKEAVINEVTSLAAKAQTLVIAEYRGITVADMTKLRVEARSKGVSLSVLKNTLARRAVAGSQFDVVADQMTGPLIYGFSEDAVAAAKVVADFAKTNDKLVIRGGAFAGKALDVNGVKQLANIPTKEVLLAQLCGLLMSPISRTAVVLGALAAKKGEGEPAAA.

It belongs to the universal ribosomal protein uL10 family. Part of the ribosomal stalk of the 50S ribosomal subunit. The N-terminus interacts with L11 and the large rRNA to form the base of the stalk. The C-terminus forms an elongated spine to which L12 dimers bind in a sequential fashion forming a multimeric L10(L12)X complex.

Functionally, forms part of the ribosomal stalk, playing a central role in the interaction of the ribosome with GTP-bound translation factors. This is Large ribosomal subunit protein uL10 from Acidovorax ebreus (strain TPSY) (Diaphorobacter sp. (strain TPSY)).